The chain runs to 417 residues: Lipoyl synthase, mitochondrial (417 aa).

The N-terminal 30 residues, 1-30 (MATSIPRSRCFLTSSTLKVVPRSRTPLRSF), are a transit peptide targeting the mitochondrion. The interval 23-62 (SRTPLRSFATTSDTPQTSVPEAPGKRSRPPTSFSDTLNAG) is disordered. Composition is skewed to polar residues over residues 30-41 (FATTSDTPQTSV) and 51-61 (PPTSFSDTLNA). Cysteine 132, cysteine 137, cysteine 143, cysteine 163, cysteine 167, cysteine 170, and serine 378 together coordinate [4Fe-4S] cluster. The region spanning 146-367 (GSSKSAATAT…RQRALDMGFL (222 aa)) is the Radical SAM core domain.

The protein belongs to the radical SAM superfamily. Lipoyl synthase family. The cofactor is [4Fe-4S] cluster.

The protein localises to the mitochondrion. It carries out the reaction [[Fe-S] cluster scaffold protein carrying a second [4Fe-4S](2+) cluster] + N(6)-octanoyl-L-lysyl-[protein] + 2 oxidized [2Fe-2S]-[ferredoxin] + 2 S-adenosyl-L-methionine + 4 H(+) = [[Fe-S] cluster scaffold protein] + N(6)-[(R)-dihydrolipoyl]-L-lysyl-[protein] + 4 Fe(3+) + 2 hydrogen sulfide + 2 5'-deoxyadenosine + 2 L-methionine + 2 reduced [2Fe-2S]-[ferredoxin]. It functions in the pathway protein modification; protein lipoylation via endogenous pathway; protein N(6)-(lipoyl)lysine from octanoyl-[acyl-carrier-protein]: step 2/2. Its function is as follows. Catalyzes the radical-mediated insertion of two sulfur atoms into the C-6 and C-8 positions of the octanoyl moiety bound to the lipoyl domains of lipoate-dependent enzymes, thereby converting the octanoylated domains into lipoylated derivatives. The chain is Lipoyl synthase, mitochondrial from Pyrenophora tritici-repentis (strain Pt-1C-BFP) (Wheat tan spot fungus).